We begin with the raw amino-acid sequence, 129 residues long: Protein Turandot A2 (129 aa).

Residues 1-21 (MNSSTSLMCFALLLISPLCMG) form the signal peptide. Residue Asn-49 is glycosylated (N-linked (GlcNAc...) asparagine).

The protein belongs to the Turandot family.

It is found in the secreted. In terms of biological role, a humoral factor that plays a role in stress tolerance; gives increased resistance to the lethal effects of bacterial challenge and stress. Regulated by the JAK/STAT pathway and NF-KB-like Relish pathway in the fat body, upd3 in the hemocytes and Mekk1 in response to septic injury and consequent immune response. This is Protein Turandot A2 (TotA2) from Drosophila simulans (Fruit fly).